We begin with the raw amino-acid sequence, 122 residues long: MIQPQTHLNVADNSGARELMCIRIIGASNRRYAHIGDIIVAVIKEAVPNMPLERSELVRAVIVRTRKELKRDNGMIIRYDDNAAVVIDQEGNPKGTRIFGAIPRELRPLNFTKIVSLAPEVL.

This sequence belongs to the universal ribosomal protein uL14 family. Part of the 50S ribosomal subunit.

Its subcellular location is the plastid. In terms of biological role, binds to 23S rRNA. The protein is Large ribosomal subunit protein uL14c of Cuscuta exaltata (Tall dodder).